A 389-amino-acid chain; its full sequence is Chalcone synthase 2 (389 aa).

Cysteine 164 is an active-site residue.

It belongs to the thiolase-like superfamily. Chalcone/stilbene synthases family.

The enzyme catalyses (E)-4-coumaroyl-CoA + 3 malonyl-CoA + 3 H(+) = 2',4,4',6'-tetrahydroxychalcone + 3 CO2 + 4 CoA. It functions in the pathway secondary metabolite biosynthesis; flavonoid biosynthesis. The primary product of this enzyme is 4,2',4',6'-tetrahydroxychalcone (also termed naringenin-chalcone or chalcone) which can under specific conditions spontaneously isomerize into naringenin. The polypeptide is Chalcone synthase 2 (CHS2) (Solanum lycopersicum (Tomato)).